The following is an 892-amino-acid chain: Alanine--tRNA ligase (892 aa).

Zn(2+) contacts are provided by H596, H600, C700, and H704.

The protein belongs to the class-II aminoacyl-tRNA synthetase family. The cofactor is Zn(2+).

It is found in the cytoplasm. It carries out the reaction tRNA(Ala) + L-alanine + ATP = L-alanyl-tRNA(Ala) + AMP + diphosphate. In terms of biological role, catalyzes the attachment of alanine to tRNA(Ala) in a two-step reaction: alanine is first activated by ATP to form Ala-AMP and then transferred to the acceptor end of tRNA(Ala). Also edits incorrectly charged Ser-tRNA(Ala) and Gly-tRNA(Ala) via its editing domain. This Methanococcus maripaludis (strain C5 / ATCC BAA-1333) protein is Alanine--tRNA ligase.